A 132-amino-acid chain; its full sequence is Fluoride-specific ion channel FluC 2 (132 aa).

Transmembrane regions (helical) follow at residues 8–28, 41–61, 66–86, and 96–116; these read LQLE…GALL, LLVN…PAAP, LLGI…LAAV, and AALG…ALGF. Residues G73 and T76 each contribute to the Na(+) site.

This sequence belongs to the fluoride channel Fluc/FEX (TC 1.A.43) family.

The protein localises to the cell inner membrane. It catalyses the reaction fluoride(in) = fluoride(out). Its activity is regulated as follows. Na(+) is not transported, but it plays an essential structural role and its presence is essential for fluoride channel function. Its function is as follows. Fluoride-specific ion channel. Important for reducing fluoride concentration in the cell, thus reducing its toxicity. The protein is Fluoride-specific ion channel FluC 2 of Synechococcus sp. (strain CC9605).